A 437-amino-acid chain; its full sequence is GTPase Obg (437 aa).

Residues 2-160 (SMFLDTAKIK…RNLELELKVL (159 aa)) enclose the Obg domain. The region spanning 161-338 (ADVGLVGFPS…LLEATAELLE (178 aa)) is the OBG-type G domain. GTP-binding positions include 167–174 (GFPSVGKS), 192–196 (FTTIV), 214–217 (DLPG), 284–287 (NKMD), and 319–321 (SGI). Mg(2+) contacts are provided by S174 and T194. In terms of domain architecture, OCT spans 359–437 (GFNPDEPEFA…IGKFEFEFVD (79 aa)).

Belongs to the TRAFAC class OBG-HflX-like GTPase superfamily. OBG GTPase family. In terms of assembly, monomer. Mg(2+) serves as cofactor.

It localises to the cytoplasm. Functionally, an essential GTPase which binds GTP, GDP and possibly (p)ppGpp with moderate affinity, with high nucleotide exchange rates and a fairly low GTP hydrolysis rate. Plays a role in control of the cell cycle, stress response, ribosome biogenesis and in those bacteria that undergo differentiation, in morphogenesis control. The sequence is that of GTPase Obg from Streptococcus suis (strain 98HAH33).